We begin with the raw amino-acid sequence, 238 residues long: E3 ubiquitin-protein ligase ZNRF2 (238 aa).

A disordered region spans residues 1–137 (MGAKQSGPAA…AGGGPGGPRL (137 aa)). Glycine 2 is lipidated: N-myristoyl glycine. Phosphoserine occurs at positions 20, 24, 75, 82, 107, 110, 141, 147, and 189. The span at 35–77 (GARAARFAAPVSGAQQPSASAGAAAAAAAAASAPAAPRSRSLG) shows a compositional bias: low complexity. Residues 195 to 236 (CAICLEELQQGDTIARLPCLCIYHKGCIDEWFEVNRSCPEHP) form an RING-type; atypical zinc finger.

As to quaternary structure, interacts with UBE2N. Interacts with ZNRF1. Interacts (when phosphorylated) with YWHAE. Phosphorylated; leading to binding to YWHAE. Phosphorylated by MTOR at Ser-147 and dephosphorylated by PP6C. Ser-147 phosphorylation stimulates vesicle-to-cytosol translocation. Expressed primarily in the nervous system. Expression is more intense in the granular cell layer of hippocampus, Purkinje cell layer of the cerebellum and the granular cell layer of the olfactory bulb. Detected in sensory neurons but not expressed in sympatic or enteric neurons. Expressed in testis, adipose tissue, columnar epithelial cells of the gut.

The protein localises to the endosome membrane. The protein resides in the lysosome membrane. Its subcellular location is the presynaptic cell membrane. It localises to the cytoplasm. The enzyme catalyses S-ubiquitinyl-[E2 ubiquitin-conjugating enzyme]-L-cysteine + [acceptor protein]-L-lysine = [E2 ubiquitin-conjugating enzyme]-L-cysteine + N(6)-ubiquitinyl-[acceptor protein]-L-lysine.. It participates in protein modification; protein ubiquitination. Functionally, E3 ubiquitin-protein ligase that plays a role in the establishment and maintenance of neuronal transmission and plasticity. Ubiquitinates the Na(+)/K(+) ATPase alpha-1 subunit/ATP1A1 and thereby influences its endocytosis and/or degradation. Also acts as a positive regulator of mTORC1 activation by amino acids, which functions upstream of the V-ATPase and of Rag-GTPases. In turn, phosphorylation by mTOR leads to its inhibition via targeting to the cytosol allowing a self-regulating feedback mechanism. This chain is E3 ubiquitin-protein ligase ZNRF2 (Znrf2), found in Mus musculus (Mouse).